A 192-amino-acid chain; its full sequence is Ion-translocating oxidoreductase complex subunit A (192 aa).

6 consecutive transmembrane segments (helical) span residues Leu-5–Leu-25, Ile-39–Val-59, Leu-65–Val-85, Ala-102–Leu-122, Ala-134–Met-154, and Ala-171–Val-191.

The protein belongs to the NqrDE/RnfAE family. The complex is composed of six subunits: RnfA, RnfB, RnfC, RnfD, RnfE and RnfG.

It localises to the cell inner membrane. Its function is as follows. Part of a membrane-bound complex that couples electron transfer with translocation of ions across the membrane. The polypeptide is Ion-translocating oxidoreductase complex subunit A (Shewanella oneidensis (strain ATCC 700550 / JCM 31522 / CIP 106686 / LMG 19005 / NCIMB 14063 / MR-1)).